The primary structure comprises 35 residues: MSDIN-like toxin proprotein 1 (35 aa).

Positions M1–P10 are excised as a propeptide. Residues I11–P20 constitute a cross-link (cyclopeptide (Ile-Pro)). A propeptide spanning residues L21–R35 is cleaved from the precursor.

It belongs to the MSDIN fungal toxin family. Processed by the macrocyclase-peptidase enzyme POPB to yield a toxic cyclic decapeptide. POPB first removes 10 residues from the N-terminus. Conformational trapping of the remaining peptide forces the enzyme to release this intermediate rather than proceed to macrocyclization. The enzyme rebinds the remaining peptide in a different conformation and catalyzes macrocyclization of the N-terminal 10 residues.

Its function is as follows. Probable toxin that belongs to the MSDIN-like toxin family responsible for a large number of food poisoning cases and deaths. In Amanita rimosa, this protein is MSDIN-like toxin proprotein 1.